We begin with the raw amino-acid sequence, 423 residues long: Glycine amidinotransferase, mitochondrial (423 aa).

The transit peptide at 1–43 directs the protein to the mitochondrion; that stretch reads MLRVRCLRGGSRGAEAVHYIGSRLGRTLTGWVQRTFQSTQAAT. Residues S46 and S49 each carry the phosphoserine modification. D170 serves as a coordination point for arginine. Catalysis depends on residues D254 and H303. D305, R322, S354, and S355 together coordinate arginine. K385 is subject to N6-acetyllysine. C407 functions as the Amidino-cysteine intermediate in the catalytic mechanism.

The protein belongs to the amidinotransferase family. In terms of assembly, homodimer. There is an equilibrium between the monomeric and dimeric forms, shifted towards the side of the monomer. As to expression, expressed in brain, heart, kidney, liver, lung, salivary gland and skeletal muscle tissue, with the highest expression in kidney. Biallelically expressed in placenta and fetal tissues.

It localises to the mitochondrion inner membrane. It is found in the cytoplasm. The catalysed reaction is L-arginine + glycine = guanidinoacetate + L-ornithine. It carries out the reaction 4-aminobutanoate + L-arginine = 4-guanidinobutanoate + L-ornithine. The enzyme catalyses beta-alanine + L-arginine = 3-guanidinopropanoate + L-ornithine. It catalyses the reaction taurine + L-arginine = taurocyamine + L-ornithine. It participates in amine and polyamine biosynthesis; creatine biosynthesis; creatine from L-arginine and glycine: step 1/2. In terms of biological role, transamidinase that catalyzes the transfer of the amidino group of L-arginine onto the amino moiety of acceptor metabolites such as glycine, beta-alanine, gamma-aminobutyric acid (GABA) and taurine yielding the corresponding guanidine derivatives. Catalyzes the rate-limiting step of creatine biosynthesis, namely the transfer of the amidino group from L-arginine to glycine to generate guanidinoacetate, which is then methylated by GAMT to form creatine. Provides creatine as a source for ATP generation in tissues with high energy demands, in particular skeletal muscle, heart and brain. This Homo sapiens (Human) protein is Glycine amidinotransferase, mitochondrial (GATM).